We begin with the raw amino-acid sequence, 335 residues long: Beta-ketoacyl-[acyl-carrier-protein] synthase III (335 aa).

Active-site residues include Cys-119 and His-261. An ACP-binding region spans residues 262–266 (QANQR). Asn-291 is a catalytic residue.

Belongs to the thiolase-like superfamily. FabH family. Homodimer.

The protein resides in the cytoplasm. It carries out the reaction malonyl-[ACP] + acetyl-CoA + H(+) = 3-oxobutanoyl-[ACP] + CO2 + CoA. It functions in the pathway lipid metabolism; fatty acid biosynthesis. In terms of biological role, catalyzes the condensation reaction of fatty acid synthesis by the addition to an acyl acceptor of two carbons from malonyl-ACP. Catalyzes the first condensation reaction which initiates fatty acid synthesis and may therefore play a role in governing the total rate of fatty acid production. Possesses both acetoacetyl-ACP synthase and acetyl transacylase activities. Its substrate specificity determines the biosynthesis of branched-chain and/or straight-chain of fatty acids. The polypeptide is Beta-ketoacyl-[acyl-carrier-protein] synthase III (Prochlorococcus marinus (strain MIT 9215)).